The chain runs to 243 residues: Geranylgeranylglyceryl phosphate synthase (243 aa).

Mg(2+) is bound by residues Asp-22 and Ser-51. Residues 170-176 (YLESGSG), 201-202 (GG), and 223-224 (GT) each bind sn-glycerol 1-phosphate.

Belongs to the GGGP/HepGP synthase family. Group II subfamily. Mg(2+) is required as a cofactor.

It localises to the cytoplasm. It carries out the reaction sn-glycerol 1-phosphate + (2E,6E,10E)-geranylgeranyl diphosphate = sn-3-O-(geranylgeranyl)glycerol 1-phosphate + diphosphate. The protein operates within membrane lipid metabolism; glycerophospholipid metabolism. Functionally, prenyltransferase that catalyzes the transfer of the geranylgeranyl moiety of geranylgeranyl diphosphate (GGPP) to the C3 hydroxyl of sn-glycerol-1-phosphate (G1P). This reaction is the first ether-bond-formation step in the biosynthesis of archaeal membrane lipids. The chain is Geranylgeranylglyceryl phosphate synthase from Picrophilus torridus (strain ATCC 700027 / DSM 9790 / JCM 10055 / NBRC 100828 / KAW 2/3).